A 315-amino-acid chain; its full sequence is 2-oxoglutarate and iron-dependent oxygenase domain-containing protein 3 (315 aa).

The disordered stretch occupies residues 1-31 (MAPQRRGPPRIPEGSSAAERRRATSTKKDRL). The Cytoplasmic portion of the chain corresponds to 1-41 (MAPQRRGPPRIPEGSSAAERRRATSTKKDRLPREAQRTWLR). Over residues 18-31 (AERRRATSTKKDRL) the composition is skewed to basic and acidic residues. A helical; Signal-anchor for type II membrane protein membrane pass occupies residues 42–62 (IVAFGVGLALVTCLLWSSVGI). Residues 63–315 (DDDVAEVVAR…DHGIEDPVLT (253 aa)) lie on the Lumenal side of the membrane. The 103-residue stretch at 203 to 305 (KPTFFSRINS…AITIAFTCNP (103 aa)) folds into the Fe2OG dioxygenase domain. The N-linked (GlcNAc...) asparagine glycan is linked to Asn-211. Fe cation-binding residues include His-226 and Asp-228. An N-linked (GlcNAc...) asparagine glycan is attached at Asn-263. His-284 contributes to the Fe cation binding site. Residue Arg-294 is part of the active site. Arg-294 lines the 2-oxoglutarate pocket.

Belongs to the OGFOD3 family. It depends on Fe(2+) as a cofactor. The cofactor is L-ascorbate.

It is found in the membrane. The sequence is that of 2-oxoglutarate and iron-dependent oxygenase domain-containing protein 3 (Ogfod3) from Mus musculus (Mouse).